The sequence spans 249 residues: Probable transcriptional regulatory protein CYA_2259 (249 aa).

The protein belongs to the TACO1 family.

The protein resides in the cytoplasm. The sequence is that of Probable transcriptional regulatory protein CYA_2259 from Synechococcus sp. (strain JA-3-3Ab) (Cyanobacteria bacterium Yellowstone A-Prime).